Consider the following 502-residue polypeptide: Alpha-ketoglutarate-dependent dioxygenase FTO (502 aa).

The interval 32-324 (TPKDDEFYQQ…SSTHRVAECS (293 aa)) is fe2OG dioxygenase domain. The substrate site is built by arginine 96 and tyrosine 108. 2-oxoglutarate is bound at residue asparagine 202. The loop L1; predicted to block binding of double-stranded DNA or RNA stretch occupies residues 210 to 221 (PYLKEEPYFGMG). Position 213 is an N6-acetyllysine (lysine 213). Positions 228 and 230 each coordinate Fe cation. 228-231 (HHDE) contacts substrate. Tyrosine 292 contributes to the 2-oxoglutarate binding site. Histidine 304 is a binding site for Fe cation. 2-oxoglutarate contacts are provided by residues 313 to 315 (RFS), threonine 317, and arginine 319.

It belongs to the fto family. Monomer. May also exist as homodimer. Requires Fe(2+) as cofactor. Ubiquitous. Detected in brain, brain cortex, hypothalamus, cerebellum, liver, pancreas, heart, kidney, white adipose tissue and skeletal muscle. Most abundant in the brain, particularly in hypothalamic nuclei governing energy balance.

The protein resides in the nucleus. It localises to the nucleus speckle. Its subcellular location is the cytoplasm. The catalysed reaction is a 5'-end (N(7)-methyl 5'-triphosphoguanosine)-(N(6),2'-O-dimethyladenosine) in mRNA + 2-oxoglutarate + O2 = a 5'-end (N(7)-methyl 5'-triphosphoguanosine)-(2'-O-methyladenosine) in mRNA + formaldehyde + succinate + CO2. It catalyses the reaction an N(6)-methyladenosine in mRNA + 2-oxoglutarate + O2 = an adenosine in mRNA + formaldehyde + succinate + CO2. It carries out the reaction N(6)-methyladenosine in U6 snRNA + 2-oxoglutarate + O2 = adenosine in U6 snRNA + formaldehyde + succinate + CO2. The enzyme catalyses a 5'-end (N(7)-methyl 5'-triphosphoguanosine)-(N(6),2'-O-dimethyladenosine) in U6 snRNA + 2-oxoglutarate + O2 = a 5'-end (N(7)-methyl 5'-triphosphoguanosine)-(2'-O-methyladenosine) in U6 snRNA + formaldehyde + succinate + CO2. The catalysed reaction is an N(1)-methyladenosine in tRNA + 2-oxoglutarate + O2 = an adenosine in tRNA + formaldehyde + succinate + CO2. With respect to regulation, activated by ascorbate. Inhibited by N-oxalylglycine, fumarate and succinate. Functionally, RNA demethylase that mediates oxidative demethylation of different RNA species, such as mRNAs, tRNAs and snRNAs, and acts as a regulator of fat mass, adipogenesis and energy homeostasis. Specifically demethylates N(6)-methyladenosine (m6A) RNA, the most prevalent internal modification of messenger RNA (mRNA) in higher eukaryotes. M6A demethylation by FTO affects mRNA expression and stability. Also able to demethylate m6A in U6 small nuclear RNA (snRNA). Mediates demethylation of N(6),2'-O-dimethyladenosine cap (m6A(m)), by demethylating the N(6)-methyladenosine at the second transcribed position of mRNAs and U6 snRNA. Demethylation of m6A(m) in the 5'-cap by FTO affects mRNA stability by promoting susceptibility to decapping. Also acts as a tRNA demethylase by removing N(1)-methyladenine from various tRNAs. Has no activity towards 1-methylguanine. Has no detectable activity towards double-stranded DNA. Also able to repair alkylated DNA and RNA by oxidative demethylation: demethylates single-stranded RNA containing 3-methyluracil, single-stranded DNA containing 3-methylthymine and has low demethylase activity towards single-stranded DNA containing 1-methyladenine or 3-methylcytosine. Ability to repair alkylated DNA and RNA is however unsure in vivo. Involved in the regulation of fat mass, adipogenesis and body weight, thereby contributing to the regulation of body size and body fat accumulation. Involved in the regulation of thermogenesis and the control of adipocyte differentiation into brown or white fat cells. Regulates activity of the dopaminergic midbrain circuitry via its ability to demethylate m6A in mRNAs. This chain is Alpha-ketoglutarate-dependent dioxygenase FTO, found in Mus musculus (Mouse).